The sequence spans 495 residues: Glutamate--tRNA ligase (495 aa).

The short motif at 12 to 22 is the 'HIGH' region element; the sequence is PSPTGHLHIGN. Residues 259-263 carry the 'KMSKS' region motif; it reads KLSKR. Position 262 (Lys-262) interacts with ATP.

It belongs to the class-I aminoacyl-tRNA synthetase family. Glutamate--tRNA ligase type 1 subfamily. As to quaternary structure, monomer.

It localises to the cytoplasm. The enzyme catalyses tRNA(Glu) + L-glutamate + ATP = L-glutamyl-tRNA(Glu) + AMP + diphosphate. In terms of biological role, catalyzes the attachment of glutamate to tRNA(Glu) in a two-step reaction: glutamate is first activated by ATP to form Glu-AMP and then transferred to the acceptor end of tRNA(Glu). In Latilactobacillus sakei subsp. sakei (strain 23K) (Lactobacillus sakei subsp. sakei), this protein is Glutamate--tRNA ligase.